The primary structure comprises 473 residues: Cannabinoid receptor 1 (473 aa).

Over 1-118 (MKSILDGLAD…CFMILNPSQQ (118 aa)) the chain is Extracellular. The tract at residues 2-23 (KSILDGLADTTFRTITTDLLYV) is required for mitochondrial localization. N-linked (GlcNAc...) asparagine glycans are attached at residues Asn79 and Asn85. A helical membrane pass occupies residues 119–144 (LAIAVLSLTLGTFTVLENLLVLCVIL). The Cytoplasmic segment spans residues 145–156 (HSRSLRCRPSYH). Residues 157–177 (FIGSLAVADLLGSVIFVYSFV) traverse the membrane as a helical segment. Topologically, residues 178-189 (DFHVFHRKDSPN) are extracellular. A helical membrane pass occupies residues 190-214 (VFLFKLGGVTASFTASVGSLFLTAI). The Cytoplasmic segment spans residues 215 to 234 (DRYISIHRPLAYKRIVTRPK). The helical transmembrane segment at 235–257 (AVVAFCVMWTIAIVIAVLPLLGW) threads the bilayer. At 258–275 (NCKKLNSVCSDIFPLIDE) the chain is on the extracellular side. Residues 276–301 (TYLMFWIGVTSILLLFIVYAYMYILW) traverse the membrane as a helical segment. The Cytoplasmic portion of the chain corresponds to 302–346 (KAHSHAVRMLQRGTQKSIIIQSTEDGKVQITRPDQTRMDIRLAKT). A helical membrane pass occupies residues 347–367 (LVLILVVLIICWGPLLAIMVY). Residues 368-379 (DVFGKMNKLIKT) lie on the Extracellular side of the membrane. Residues 380-401 (IFAFCSMLCLLNSTVNPIIYAL) traverse the membrane as a helical segment. The Cytoplasmic segment spans residues 402 to 473 (RSKDLRHAFR…VSTDTTAEAL (72 aa)). Residue Cys417 is the site of S-palmitoyl cysteine attachment.

The protein belongs to the G-protein coupled receptor 1 family. Post-translationally, palmitoylation at Cys-417 is important for recruitment at both plasma membrane and lipid rafts and association with G protein alpha subunits.

It is found in the cell membrane. The protein resides in the mitochondrion outer membrane. The protein localises to the cell projection. Its subcellular location is the axon. It localises to the presynapse. Functionally, G-protein coupled receptor for cannabinoids. Mediates many cannabinoid-induced effects in the central nervous system (CNS), as well as in peripheral tissues. Regulates cellular respiration and energy production in response to cannabinoids. Signaling typically involves reduction in cyclic AMP. In Taeniopygia guttata (Zebra finch), this protein is Cannabinoid receptor 1 (CNR1).